The sequence spans 206 residues: Ras-related protein ralB-A (206 aa).

21–28 (GSGGVGKS) serves as a coordination point for GTP. Residues 43 to 51 (YEPTKADSY) carry the Effector region motif. GTP-binding positions include 68 to 72 (DTAGQ) and 128 to 131 (NKSD). The segment covering 180 to 189 (KMSENKDKNG) has biased composition (basic and acidic residues). Positions 180–206 (KMSENKDKNGKKSGKSKKGFKQRCCLL) are disordered. A compositionally biased stretch (basic residues) spans 190–200 (KKSGKSKKGFK). At C203 the chain carries Cysteine methyl ester. C203 is lipidated: S-geranylgeranyl cysteine. A propeptide spans 204-206 (CLL) (removed in mature form).

The protein belongs to the small GTPase superfamily. Ras family. As to quaternary structure, interacts with ralbp1 and rap1gds1. As to expression, weakly expressed in adult tissues and highest levels were found in heart, brain and testes.

The protein resides in the cell membrane. It is found in the midbody. The catalysed reaction is GTP + H2O = GDP + phosphate + H(+). Multifunctional GTPase involved in a variety of cellular processes including gene expression, cell migration, cell proliferation, oncogenic transformation and membrane trafficking. Accomplishes its multiple functions by interacting with distinct downstream effectors. Acts as a GTP sensor for GTP-dependent exocytosis of dense core vesicles. Required both to stabilize the assembly of the exocyst complex and to localize functional exocyst complexes to the leading edge of migrating cells. Required for suppression of apoptosis. In late stages of cytokinesis, upon completion of the bridge formation between dividing cells, mediates exocyst recruitment to the midbody to drive abscission. Regulates the actin cytoskeleton to play a role in gastrulation or neurulation. During the cleavage stages, the GTP-bound form induces a cortical reaction that affects the localization of pigment granules. Activated by the FGF pathway via ras and ral-GDS, but independently of raf. Directs ralbp1 to the plasma membrane. Involved in ligand-dependent receptor mediated endocytosis of the EGF and insulin receptors. The polypeptide is Ras-related protein ralB-A (ralb-a) (Xenopus laevis (African clawed frog)).